The primary structure comprises 421 residues: Gamma-glutamyl phosphate reductase (421 aa).

Belongs to the gamma-glutamyl phosphate reductase family.

It localises to the cytoplasm. It catalyses the reaction L-glutamate 5-semialdehyde + phosphate + NADP(+) = L-glutamyl 5-phosphate + NADPH + H(+). Its pathway is amino-acid biosynthesis; L-proline biosynthesis; L-glutamate 5-semialdehyde from L-glutamate: step 2/2. Catalyzes the NADPH-dependent reduction of L-glutamate 5-phosphate into L-glutamate 5-semialdehyde and phosphate. The product spontaneously undergoes cyclization to form 1-pyrroline-5-carboxylate. This Acinetobacter baumannii (strain ACICU) protein is Gamma-glutamyl phosphate reductase.